Consider the following 288-residue polypeptide: Phosphatidate cytidylyltransferase (288 aa).

7 consecutive transmembrane segments (helical) span residues 10 to 30, 52 to 72, 89 to 109, 118 to 138, 152 to 172, 192 to 212, and 223 to 243; these read IVLI…YFAL, PLIR…WLYT, LLLI…ISYP, NPLL…AGVL, GLFL…GAYF, WEGV…FIHF, and ITGF…GDLT.

It belongs to the CDS family.

The protein resides in the cell inner membrane. It carries out the reaction a 1,2-diacyl-sn-glycero-3-phosphate + CTP + H(+) = a CDP-1,2-diacyl-sn-glycerol + diphosphate. Its pathway is phospholipid metabolism; CDP-diacylglycerol biosynthesis; CDP-diacylglycerol from sn-glycerol 3-phosphate: step 3/3. In Haemophilus influenzae (strain ATCC 51907 / DSM 11121 / KW20 / Rd), this protein is Phosphatidate cytidylyltransferase (cdsA).